Reading from the N-terminus, the 294-residue chain is Potassium-transporting ATPase subunit beta (294 aa).

Residues 1–36 (MAALQEKKSCSQRMAEFRQYCWNPDTGQMLGRTPAR) lie on the Cytoplasmic side of the membrane. Residues 37–57 (WVWISLYYAAFYVVMTGLFAL) form a helical; Signal-anchor for type II membrane protein membrane-spanning segment. Residues 58 to 294 (CIYVLMQTID…KVEFKLTIQK (237 aa)) lie on the Extracellular side of the membrane. Asn-99, Asn-103, Asn-130, Asn-146, and Asn-161 each carry an N-linked (GlcNAc...) asparagine glycan. Residues Cys-131 and Cys-152 are joined by a disulfide bond. Residues Cys-162 and Cys-178 are joined by a disulfide bond. Asn-193 and Asn-225 each carry an N-linked (GlcNAc...) asparagine glycan. The tract at residues 194 to 294 (NTAPRVDCTF…KVEFKLTIQK (101 aa)) is immunoglobulin-like. An intrachain disulfide couples Cys-201 to Cys-266.

The protein belongs to the X(+)/potassium ATPases subunit beta family. The ATPase pump is composed of two subunits: alpha (catalytic) and beta (regulatory). Interacts with alpha subunit ATP12A; this interaction is required for the formation of a functionally active pump and targeting at the plasma membrane. Interacts (via N-terminus) with alpha subunit ATP4A (via the P-domain). N-glycosylation is necessary for assembly and functional expression of the pump at the plasma membrane. In terms of tissue distribution, stomach.

It is found in the apical cell membrane. The protein localises to the cell membrane. Its function is as follows. The beta subunit of the gastric H(+)/K(+) ATPase pump which transports H(+) ions in exchange for K(+) ions across the apical membrane of parietal cells. Plays a structural and regulatory role in the assembly and membrane targeting of a functionally active pump. Within a transport cycle, the transfer of a H(+) ion across the membrane is coupled to ATP hydrolysis and is associated with a transient phosphorylation of the alpha subunit that shifts the pump conformation from inward-facing (E1) to outward-facing state (E2). Interacts with the phosphorylation domain of the alpha subunit and functions as a ratchet, stabilizing the lumenal-open E2 conformation and preventing the reverse reaction of the transport cycle. The sequence is that of Potassium-transporting ATPase subunit beta (Atp4b) from Rattus norvegicus (Rat).